The chain runs to 339 residues: GTPase Obg (339 aa).

An Obg domain is found at Met-1–Leu-159. Residues Ala-160–Glu-333 form the OBG-type G domain. Residues Gly-166–Ser-173, Phe-191–Tyr-195, Asp-213–Gly-216, Asn-283–Asp-286, and Ser-314–Ile-316 each bind GTP. Mg(2+) contacts are provided by Ser-173 and Thr-193.

It belongs to the TRAFAC class OBG-HflX-like GTPase superfamily. OBG GTPase family. Monomer. The cofactor is Mg(2+).

Its subcellular location is the cytoplasm. An essential GTPase which binds GTP, GDP and possibly (p)ppGpp with moderate affinity, with high nucleotide exchange rates and a fairly low GTP hydrolysis rate. Plays a role in control of the cell cycle, stress response, ribosome biogenesis and in those bacteria that undergo differentiation, in morphogenesis control. In Coxiella burnetii (strain RSA 331 / Henzerling II), this protein is GTPase Obg.